Here is a 230-residue protein sequence, read N- to C-terminus: Thiamine-triphosphatase (230 aa).

Ala-2 bears the N-acetylalanine mark. In terms of domain architecture, CYTH spans 5-201; that stretch reads LIEVERKFLP…AKLIVYLQRF (197 aa). Glu-7 and Glu-9 together coordinate Mg(2+). Substrate-binding residues include Lys-11, Arg-55, Arg-57, Lys-65, and Arg-125. Residues Asp-145, Glu-157, and Glu-159 each coordinate Mg(2+). Glu-157 is a substrate binding site. Substrate is bound at residue Lys-193.

This sequence belongs to the ThTPase family. In terms of assembly, monomer. Requires Mg(2+) as cofactor.

The protein resides in the cytoplasm. The catalysed reaction is thiamine triphosphate + H2O = thiamine diphosphate + phosphate + H(+). Its function is as follows. Hydrolase highly specific for thiamine triphosphate (ThTP). In Macaca fascicularis (Crab-eating macaque), this protein is Thiamine-triphosphatase (THTPA).